Reading from the N-terminus, the 219-residue chain is UPF0502 protein HCH_06091 (219 aa).

It belongs to the UPF0502 family.

The chain is UPF0502 protein HCH_06091 from Hahella chejuensis (strain KCTC 2396).